The chain runs to 822 residues: ATP-dependent zinc metalloprotease FtsH (822 aa).

At 1 to 76 (MEFNKLELLI…NQKEPGKARK (76 aa)) the chain is on the cytoplasmic side. The span at 44-54 (SLDQPSDAPSN) shows a compositional bias: polar residues. The tract at residues 44 to 71 (SLDQPSDAPSNNKKRNLDQPDNPNQKEP) is disordered. Residues 77 to 97 (IIWSFIIIILVLGVLALIILS) traverse the membrane as a helical segment. The Extracellular segment spans residues 98-251 (GFSFSATSLN…QSMSLPTSYS (154 aa)). The helical transmembrane segment at 252–272 (FYTAASLVLSILPFILLIGII) threads the bilayer. Residues 273 to 822 (YYSMRKMGQA…SKESSSDKKK (550 aa)) lie on the Cytoplasmic side of the membrane. 347–354 (GPPGTGKT) is a binding site for ATP. A Zn(2+)-binding site is contributed by His-569. Glu-570 is an active-site residue. Residues His-573 and Asp-648 each contribute to the Zn(2+) site. The span at 758 to 794 (KKELEEKKKAEDLIRKAKKESEASSKEEKEMDVEKKV) shows a compositional bias: basic and acidic residues. The interval 758 to 822 (KKELEEKKKA…SKESSSDKKK (65 aa)) is disordered. A compositionally biased stretch (low complexity) spans 796–805 (KPSASSTEPT). A compositionally biased stretch (basic and acidic residues) spans 812 to 822 (PSKESSSDKKK).

It in the central section; belongs to the AAA ATPase family. In the C-terminal section; belongs to the peptidase M41 family. As to quaternary structure, homohexamer. Requires Zn(2+) as cofactor.

The protein localises to the cell membrane. In terms of biological role, acts as a processive, ATP-dependent zinc metallopeptidase for both cytoplasmic and membrane proteins. Plays a role in the quality control of integral membrane proteins. The protein is ATP-dependent zinc metalloprotease FtsH of Malacoplasma penetrans (strain HF-2) (Mycoplasma penetrans).